A 50-amino-acid polypeptide reads, in one-letter code: F420-non-reducing hydrogenase vhu subunit U (50 aa).

U27 and C30 together coordinate Ni(2+). A non-standard amino acid (selenocysteine) is located at residue U27. A propeptide spans 34–50 (IIVKDEKGNKIIEVIKE) (removed in mature form).

This sequence belongs to the [NiFe]/[NiFeSe] hydrogenase large subunit family. In terms of assembly, the F420-non-reducing hydrogenase vhu is composed of four subunits; VhuA, VhuD, VhuG and VhuU. Requires Ni(2+) as cofactor.

The sequence is that of F420-non-reducing hydrogenase vhu subunit U (vhuU) from Methanocaldococcus jannaschii (strain ATCC 43067 / DSM 2661 / JAL-1 / JCM 10045 / NBRC 100440) (Methanococcus jannaschii).